The sequence spans 131 residues: Small ribosomal subunit protein eS8 (131 aa).

A disordered region spans residues 1 to 38; it reads MKLGAYYKGGDLKKPSGGKKRKVRRTKKKALGGGPPQI. The span at 16–30 shows a compositional bias: basic residues; sequence SGGKKRKVRRTKKKA.

Belongs to the eukaryotic ribosomal protein eS8 family. Part of the 30S ribosomal subunit.

The chain is Small ribosomal subunit protein eS8 from Pyrobaculum arsenaticum (strain DSM 13514 / JCM 11321 / PZ6).